Reading from the N-terminus, the 341-residue chain is Galactofuranose transporter permease protein YtfT (341 aa).

The Cytoplasmic portion of the chain corresponds to 1-25 (MMPQSLPDTTTPKRRFRWPTGMPQL). Residues 26 to 46 (VALLLVLLVDSLVAPHFWQVV) form a helical membrane-spanning segment. The Periplasmic portion of the chain corresponds to 47-65 (LQDGRLFGSPIDILNRAAP). Helical transmembrane passes span 66–86 (VALL…DLSV) and 87–107 (GAVM…GFSL). Residue Pro108 is a topological domain, periplasmic. Residues 109 to 129 (IVLLSALGTGILAGLWNGILV) form a helical membrane-spanning segment. At 130-136 (AILKIQP) the chain is on the cytoplasmic side. The chain crosses the membrane as a helical span at residues 137–157 (FVATLILMVAGRGVAQLITAG). At 158-174 (QIVTFNSPDLSWFGSGS) the chain is on the periplasmic side. The chain crosses the membrane as a helical span at residues 175–195 (LLFLPTPVIIAVLTLILFWLL). The Cytoplasmic segment spans residues 196–223 (TRKTALGMFIEAVGINIRAAKNAGVNTR). Residues 224–244 (IIVMLTYVLSGLCAAIAGIIV) traverse the membrane as a helical segment. Topologically, residues 245–255 (AADIRGADANN) are periplasmic. A helical membrane pass occupies residues 256 to 276 (AGLWLELDAILAVVIGGGSLM). Over 277–281 (GGRFN) the chain is Cytoplasmic. Helical transmembrane passes span 282-302 (LLLS…ILLS) and 303-323 (GFPP…VLIV). At 324-341 (QSQRFISLIKGVRSRDKT) the chain is on the cytoplasmic side.

This sequence belongs to the binding-protein-dependent transport system permease family. AraH/RbsC subfamily. The complex is composed of two ATP-binding proteins (YtfR), two transmembrane proteins (YtfT and YjfF) and a solute-binding protein (YtfQ).

It is found in the cell inner membrane. Its function is as follows. Part of the ABC transporter complex YtfQRT-YjfF involved in galactofuranose transport. Probably responsible for the translocation of the substrate across the membrane. This Escherichia coli (strain K12) protein is Galactofuranose transporter permease protein YtfT (ytfT).